Consider the following 800-residue polypeptide: DNA topoisomerase 4 subunit A (800 aa).

The Topo IIA-type catalytic domain maps to 31 to 495 (LPDVRDGLKP…EIEEIKIDKE (465 aa)). Catalysis depends on Y119, which acts as the O-(5'-phospho-DNA)-tyrosine intermediate.

Belongs to the type II topoisomerase GyrA/ParC subunit family. ParC type 2 subfamily. Heterotetramer composed of ParC and ParE.

Its subcellular location is the cell membrane. The enzyme catalyses ATP-dependent breakage, passage and rejoining of double-stranded DNA.. Functionally, topoisomerase IV is essential for chromosome segregation. It relaxes supercoiled DNA. Performs the decatenation events required during the replication of a circular DNA molecule. In Staphylococcus aureus (strain MSSA476), this protein is DNA topoisomerase 4 subunit A.